We begin with the raw amino-acid sequence, 1377 residues long: DNA-directed RNA polymerase subunit beta (1377 aa).

This sequence belongs to the RNA polymerase beta chain family. In terms of assembly, the RNAP catalytic core consists of 2 alpha, 1 beta, 1 beta' and 1 omega subunit. When a sigma factor is associated with the core the holoenzyme is formed, which can initiate transcription.

The catalysed reaction is RNA(n) + a ribonucleoside 5'-triphosphate = RNA(n+1) + diphosphate. DNA-dependent RNA polymerase catalyzes the transcription of DNA into RNA using the four ribonucleoside triphosphates as substrates. This chain is DNA-directed RNA polymerase subunit beta, found in Aromatoleum aromaticum (strain DSM 19018 / LMG 30748 / EbN1) (Azoarcus sp. (strain EbN1)).